A 64-amino-acid chain; its full sequence is Large ribosomal subunit protein bL33 (64 aa).

Positions 16 to 25 are enriched in basic and acidic residues; sequence EARTSSEPRR. The disordered stretch occupies residues 16–41; sequence EARTSSEPRRSNGVSRYTTEKNKRNT.

Belongs to the bacterial ribosomal protein bL33 family.

The sequence is that of Large ribosomal subunit protein bL33 from Prochlorococcus marinus subsp. pastoris (strain CCMP1986 / NIES-2087 / MED4).